Reading from the N-terminus, the 134-residue chain is Arsenate reductase (134 aa).

Residues Cys11, Cys83, and Cys90 each act as nucleophile in the active site. 2 cysteine pairs are disulfide-bonded: Cys11/Cys83 and Cys83/Cys90.

This sequence belongs to the low molecular weight phosphotyrosine protein phosphatase family. Thioredoxin-coupled ArsC subfamily.

Its subcellular location is the cytoplasm. The enzyme catalyses arsenate + [thioredoxin]-dithiol + H(+) = arsenite + [thioredoxin]-disulfide + H2O. In terms of biological role, catalyzes the reduction of arsenate [As(V)] to arsenite [As(III)]. The polypeptide is Arsenate reductase (Bacillus cereus (strain Q1)).